Here is a 186-residue protein sequence, read N- to C-terminus: Threonylcarbamoyl-AMP synthase (186 aa).

A YrdC-like domain is found at Val-2–Gly-186.

Belongs to the SUA5 family. TsaC subfamily.

It localises to the cytoplasm. It carries out the reaction L-threonine + hydrogencarbonate + ATP = L-threonylcarbamoyladenylate + diphosphate + H2O. Functionally, required for the formation of a threonylcarbamoyl group on adenosine at position 37 (t(6)A37) in tRNAs that read codons beginning with adenine. Catalyzes the conversion of L-threonine, HCO(3)(-)/CO(2) and ATP to give threonylcarbamoyl-AMP (TC-AMP) as the acyladenylate intermediate, with the release of diphosphate. The protein is Threonylcarbamoyl-AMP synthase of Vibrio vulnificus (strain CMCP6).